The sequence spans 292 residues: NAD kinase (292 aa).

D73 acts as the Proton acceptor in catalysis. NAD(+)-binding positions include 73 to 74 (DG), 147 to 148 (NE), H158, R175, D177, 188 to 193 (TGYSLS), and Q248.

Belongs to the NAD kinase family. A divalent metal cation serves as cofactor.

It localises to the cytoplasm. It catalyses the reaction NAD(+) + ATP = ADP + NADP(+) + H(+). Involved in the regulation of the intracellular balance of NAD and NADP, and is a key enzyme in the biosynthesis of NADP. Catalyzes specifically the phosphorylation on 2'-hydroxyl of the adenosine moiety of NAD to yield NADP. The protein is NAD kinase of Buchnera aphidicola subsp. Baizongia pistaciae (strain Bp).